A 265-amino-acid polypeptide reads, in one-letter code: uncharacterized protein (265 aa).

Positions Met1–Ala23 are cleaved as a signal peptide. One can recognise a NodB homology domain in the interval Lys67–Lys248.

This sequence belongs to the polysaccharide deacetylase family.

This is an uncharacterized protein from Geobacillus stearothermophilus (Bacillus stearothermophilus).